Here is an 89-residue protein sequence, read N- to C-terminus: MTVGKQHINKSLLYEGRVVSNSMNKTVVIVVETRKTHPKFKKIVRRSIKIKVHDEKNECTIGDKILAIETRPLSREKRHRLYRIVEKAK.

This sequence belongs to the universal ribosomal protein uS17 family. In terms of assembly, part of the 30S ribosomal subunit.

In terms of biological role, one of the primary rRNA binding proteins, it binds specifically to the 5'-end of 16S ribosomal RNA. This chain is Small ribosomal subunit protein uS17, found in Leptospira borgpetersenii serovar Hardjo-bovis (strain JB197).